The chain runs to 207 residues: Interleukin-6 (207 aa).

An N-terminal signal peptide occupies residues 1–20 (MNSLSTSAFSLGLLLVMATA). Cys-67 and Cys-73 are joined by a disulfide. Ser-76 carries the post-translational modification Phosphoserine. Cys-96 and Cys-106 are joined by a disulfide.

It belongs to the IL-6 superfamily. Component of a hexamer of two molecules each of IL6, IL6R and IL6ST; first binds to IL6R to associate with the signaling subunit IL6ST. Interacts with IL6R (via the N-terminal ectodomain); this interaction may be affected by IL6R-binding with SORL1, hence decreasing IL6 cis signaling. Interacts with SORL1 (via the N-terminal ectodomain); this interaction leads to IL6 internalization and lysosomal degradation. May form a trimeric complex with the soluble SORL1 ectodomain and soluble IL6R receptor; this interaction might stabilize circulating IL6, hence promoting IL6 trans signaling.

It is found in the secreted. Cytokine with a wide variety of biological functions in immunity, tissue regeneration, and metabolism. Binds to IL6R, then the complex associates to the signaling subunit IL6ST/gp130 to trigger the intracellular IL6-signaling pathway. The interaction with the membrane-bound IL6R and IL6ST stimulates 'classic signaling', whereas the binding of IL6 and soluble IL6R to IL6ST stimulates 'trans-signaling'. Alternatively, 'cluster signaling' occurs when membrane-bound IL6:IL6R complexes on transmitter cells activate IL6ST receptors on neighboring receiver cells. In terms of biological role, IL6 is a potent inducer of the acute phase response. Rapid production of IL6 contributes to host defense during infection and tissue injury, but excessive IL6 synthesis is involved in disease pathology. In the innate immune response, is synthesized by myeloid cells, such as macrophages and dendritic cells, upon recognition of pathogens through toll-like receptors (TLRs) at the site of infection or tissue injury. In the adaptive immune response, is required for the differentiation of B cells into immunoglobulin-secreting cells. Plays a major role in the differentiation of CD4(+) T cell subsets. Essential factor for the development of T follicular helper (Tfh) cells that are required for the induction of germinal-center formation. Required to drive naive CD4(+) T cells to the Th17 lineage. Also required for proliferation of myeloma cells and the survival of plasmablast cells. Its function is as follows. Acts as an essential factor in bone homeostasis and on vessels directly or indirectly by induction of VEGF, resulting in increased angiogenesis activity and vascular permeability. Induces, through 'trans-signaling' and synergistically with IL1B and TNF, the production of VEGF. Involved in metabolic controls, is discharged into the bloodstream after muscle contraction increasing lipolysis and improving insulin resistance. 'Trans-signaling' in central nervous system also regulates energy and glucose homeostasis. Mediates, through GLP-1, crosstalk between insulin-sensitive tissues, intestinal L cells and pancreatic islets to adapt to changes in insulin demand. Also acts as a myokine. Plays a protective role during liver injury, being required for maintenance of tissue regeneration. Also has a pivotal role in iron metabolism by regulating HAMP/hepcidin expression upon inflammation or bacterial infection. Through activation of IL6ST-YAP-NOTCH pathway, induces inflammation-induced epithelial regeneration. In Canis lupus familiaris (Dog), this protein is Interleukin-6 (IL6).